Consider the following 223-residue polypeptide: MQKQRFCLDTTAITDSGVRKSLGATNISESAEKIMDIISKARVKLDISCHIPYNTVYNELIGFLNREGCKNEIIIKVDTWLVKKTPNRYEIKIPSEILYEYIKDLRERINKGMRISENAMYETALEAYILKKPEEKNKDDVLNEVLSKTVNNFRDKYRNALRGGTLDSAPDLDVLLLAKELDAAVVANDEGIEKWAQRLGLRFVNAKDFPFILQEYLDMWGKK.

The protein belongs to the HARP family.

It carries out the reaction Endonucleolytic cleavage of RNA, removing 5'-extranucleotides from tRNA precursor.. RNA-free RNase P that catalyzes the removal of the 5'-leader sequence from pre-tRNA to produce the mature 5'-terminus. The sequence is that of RNA-free ribonuclease P from Methanococcus vannielii (strain ATCC 35089 / DSM 1224 / JCM 13029 / OCM 148 / SB).